A 122-amino-acid polypeptide reads, in one-letter code: Lithostathine (122 aa).

A signal peptide spans Met-1–Gly-26. A propeptide spanning residues Glu-27–Arg-37 is cleaved from the precursor. Residues Ile-38 to Trp-122 form the C-type lectin domain. A disulfide bridge links Cys-40 with Cys-51.

Cleaved to give an A chain and a B chain joined by a disulfide bond. In terms of tissue distribution, in pancreatic acinar cells.

It localises to the secreted. In terms of biological role, might act as an inhibitor of spontaneous calcium carbonate precipitation. The chain is Lithostathine (PTP) from Sus scrofa (Pig).